The sequence spans 519 residues: Probable cytosol aminopeptidase (519 aa).

2 residues coordinate Mn(2+): K251 and D256. K263 is an active-site residue. Mn(2+) is bound by residues D274, D333, and E335. R337 is an active-site residue. Positions V487–P502 are enriched in low complexity. A disordered region spans residues V487–P519.

Belongs to the peptidase M17 family. Mn(2+) serves as cofactor.

The protein resides in the cytoplasm. The enzyme catalyses Release of an N-terminal amino acid, Xaa-|-Yaa-, in which Xaa is preferably Leu, but may be other amino acids including Pro although not Arg or Lys, and Yaa may be Pro. Amino acid amides and methyl esters are also readily hydrolyzed, but rates on arylamides are exceedingly low.. It catalyses the reaction Release of an N-terminal amino acid, preferentially leucine, but not glutamic or aspartic acids.. Functionally, presumably involved in the processing and regular turnover of intracellular proteins. Catalyzes the removal of unsubstituted N-terminal amino acids from various peptides. In Verminephrobacter eiseniae (strain EF01-2), this protein is Probable cytosol aminopeptidase.